The following is a 647-amino-acid chain: Leishmanolysin-like peptidase (647 aa).

Residue His264 coordinates Zn(2+). Glu265 is an active-site residue. Zn(2+)-binding residues include His268 and His370.

Belongs to the peptidase M8 family. The cofactor is Zn(2+). Expressed in all cell lines analyzed.

It is found in the cytoplasm. The protein localises to the lipid droplet. Functionally, metalloprotease. The chain is Leishmanolysin-like peptidase (LMLN) from Homo sapiens (Human).